A 137-amino-acid chain; its full sequence is Putative pre-16S rRNA nuclease (137 aa).

It belongs to the YqgF nuclease family.

It localises to the cytoplasm. Could be a nuclease involved in processing of the 5'-end of pre-16S rRNA. In Actinobacillus pleuropneumoniae serotype 7 (strain AP76), this protein is Putative pre-16S rRNA nuclease.